A 307-amino-acid polypeptide reads, in one-letter code: Aspartate carbamoyltransferase catalytic subunit (307 aa).

2 residues coordinate carbamoyl phosphate: R58 and T59. K86 contributes to the L-aspartate binding site. Positions 108, 138, and 141 each coordinate carbamoyl phosphate. L-aspartate contacts are provided by R171 and R223. Positions 264 and 265 each coordinate carbamoyl phosphate.

Belongs to the aspartate/ornithine carbamoyltransferase superfamily. ATCase family. Heterododecamer (2C3:3R2) of six catalytic PyrB chains organized as two trimers (C3), and six regulatory PyrI chains organized as three dimers (R2).

The enzyme catalyses carbamoyl phosphate + L-aspartate = N-carbamoyl-L-aspartate + phosphate + H(+). The protein operates within pyrimidine metabolism; UMP biosynthesis via de novo pathway; (S)-dihydroorotate from bicarbonate: step 2/3. Functionally, catalyzes the condensation of carbamoyl phosphate and aspartate to form carbamoyl aspartate and inorganic phosphate, the committed step in the de novo pyrimidine nucleotide biosynthesis pathway. The protein is Aspartate carbamoyltransferase catalytic subunit of Streptococcus suis (strain 98HAH33).